The chain runs to 361 residues: Aromatic amino acid aminotransferase (361 aa).

K221 carries the N6-(pyridoxal phosphate)lysine modification.

This sequence belongs to the class-II pyridoxal-phosphate-dependent aminotransferase family. As to quaternary structure, homodimer. Requires pyridoxal 5'-phosphate as cofactor.

It catalyses the reaction an aromatic L-alpha-amino acid + 2-oxoglutarate = an aromatic oxo-acid + L-glutamate. In terms of biological role, aminotransferase that catalyzes the conversion of aromatic amino acids and 2-oxoglutarate into corresponding aromatic oxo acids and L-glutamate. This is Aromatic amino acid aminotransferase from Mycobacterium ulcerans (strain Agy99).